Reading from the N-terminus, the 102-residue chain is Exocrine gland-secreted peptide 1 (102 aa).

The first 22 residues, 1–22 (MTSLPVLLFLIILLLPSMITEG), serve as a signal peptide directing secretion. Cys-63 and Cys-95 are joined by a disulfide.

The protein belongs to the exocrine gland-secreted peptide family. Monomer. Expressed in the extraorbital lacrimal gland from where it is secreted into tears.

It localises to the secreted. Functionally, male-specific phermone which is recognized by the Vmn2r116/V2rp5 receptor in the vomeronasal organ (VNO) and enhances female sexual receptive behavior (lordosis) upon male mounting, resulting in successful copulation. The chain is Exocrine gland-secreted peptide 1 from Mus musculus (Mouse).